The sequence spans 302 residues: Putative glycine N-acyltransferase-like protein 1B (302 aa).

Belongs to the glycine N-acyltransferase family.

It catalyses the reaction an acyl-CoA + L-glutamine = an N(2)-acyl-L-glutamine + CoA + H(+). Its function is as follows. Putative acyltransferase which transfers an acyl group to the N-terminus of glutamine. Can use phenylacetyl-CoA as an acyl donor. In Homo sapiens (Human), this protein is Putative glycine N-acyltransferase-like protein 1B.